A 503-amino-acid chain; its full sequence is Long-chain-aldehyde dehydrogenase (503 aa).

Residue 218-224 (GYGAEVG) participates in NAD(+) binding. Catalysis depends on residues Glu262 and Cys301.

The protein belongs to the aldehyde dehydrogenase family. As to quaternary structure, homotetramer.

It carries out the reaction a long-chain fatty aldehyde + NAD(+) + H2O = a long-chain fatty acid + NADH + 2 H(+). With respect to regulation, completely inhibited by p-chloromercuribenzoate and N-ethylmaleimide. Strongly inhibited by iodoacetate. Inhibited by Pb(2+), Fe(3+), Ag(+) and Hg(2+) and partially inhibited by several other metal ions Mn(2+), Zn(2+) and Cu(2+). Its function is as follows. Aldehyde dehydrogenase that shows activity toward n-alkanals (C(4) to C(14)), with a preference for longer carbon chains. The best substrate is tetradecanal. In Acinetobacter sp, this protein is Long-chain-aldehyde dehydrogenase (ald1).